The following is a 101-amino-acid chain: Small ribosomal subunit protein uS14 (101 aa).

Positions 1–10 are enriched in basic and acidic residues; the sequence is MAKKSAIEKN. The interval 1–23 is disordered; that stretch reads MAKKSAIEKNNRRKKMTKNAAPK. The span at 11-23 shows a compositional bias: basic residues; that stretch reads NRRKKMTKNAAPK.

The protein belongs to the universal ribosomal protein uS14 family. In terms of assembly, part of the 30S ribosomal subunit. Contacts proteins S3 and S10.

In terms of biological role, binds 16S rRNA, required for the assembly of 30S particles and may also be responsible for determining the conformation of the 16S rRNA at the A site. This chain is Small ribosomal subunit protein uS14, found in Rhodopseudomonas palustris (strain TIE-1).